A 291-amino-acid polypeptide reads, in one-letter code: ATP synthase gamma chain (291 aa).

The protein belongs to the ATPase gamma chain family. F-type ATPases have 2 components, CF(1) - the catalytic core - and CF(0) - the membrane proton channel. CF(1) has five subunits: alpha(3), beta(3), gamma(1), delta(1), epsilon(1). CF(0) has three main subunits: a, b and c.

Its subcellular location is the cell inner membrane. Produces ATP from ADP in the presence of a proton gradient across the membrane. The gamma chain is believed to be important in regulating ATPase activity and the flow of protons through the CF(0) complex. In Burkholderia pseudomallei (strain 1106a), this protein is ATP synthase gamma chain.